The sequence spans 581 residues: Laccase-2 (581 aa).

Positions 1–19 (MKYSTVFTALTALFAQASA) are cleaved as a signal peptide. Plastocyanin-like domains lie at 74 to 191 (SVEN…GPAT) and 197 to 353 (DVGA…YDSS). 3 N-linked (GlcNAc...) asparagine glycosylation sites follow: N77, N93, and N120. H125, H127, H169, and H171 together coordinate Cu cation. Cysteines 146 and 562 form a disulfide. N-linked (GlcNAc...) asparagine glycans are attached at residues N232, N283, N343, N408, N427, and N441. In terms of domain architecture, Plastocyanin-like 3 spans 413–547 (LLDWSSPTTL…AMQFVESQSS (135 aa)). 7 residues coordinate Cu cation: H464, H467, H469, H526, C527, H528, and H532.

Belongs to the multicopper oxidase family. It depends on Cu cation as a cofactor.

It localises to the secreted. It carries out the reaction 4 hydroquinone + O2 = 4 benzosemiquinone + 2 H2O. Lignin degradation and detoxification of lignin-derived products. The protein is Laccase-2 (lcc2) of Botryotinia fuckeliana (Noble rot fungus).